The sequence spans 318 residues: Olfactory receptor 13C7 (318 aa).

Residues 1 to 27 (MVSANQTASVTEFILLGLSAHPKLEKT) lie on the Extracellular side of the membrane. The helical transmembrane segment at 28 to 48 (FFVLILLMYLVILLGNGVLIL) threads the bilayer. The Cytoplasmic segment spans residues 49 to 61 (MTVSNSHLHMPMY). Residues 62–82 (FFLGNLSFLDICYTTSSVPLI) traverse the membrane as a helical segment. The Extracellular portion of the chain corresponds to 83–100 (LDSFLTPRKTISFSACAV). A helical membrane pass occupies residues 101–121 (QMFLSFAMGATECVLLSMMAF). The Cytoplasmic segment spans residues 122–181 (DRYVAICNPLRYPVVMSKAAYMPKAAGSWVAGSTASMVQTSLAMRLPFCGDNIINHFTCE). Residues 182 to 202 (ILAVLKLACADISVNVISMGV) form a helical membrane-spanning segment. At 203–205 (TNV) the chain is on the extracellular side. A helical membrane pass occupies residues 206-226 (IFLGVPVLFISFSYVFIIATI). The Cytoplasmic segment spans residues 227–238 (LRIPSAEGRKKA). A helical membrane pass occupies residues 239-259 (FSTCSAHLTVVVIFYGTILFM). The Extracellular segment spans residues 260 to 278 (YGKPKSKDPLGADKQDLAD). A helical transmembrane segment spans residues 279–289 (KLISLFYGVVT). At 290 to 318 (PMLNPIIYSLRNKDVKAAVRDLIFQKCFA) the chain is on the cytoplasmic side.

It belongs to the G-protein coupled receptor 1 family.

It localises to the cell membrane. In terms of biological role, odorant receptor. This chain is Olfactory receptor 13C7, found in Homo sapiens (Human).